The primary structure comprises 432 residues: Keratin, type I cytoskeletal 18-B (432 aa).

The span at 1 to 21 (MSYSRSMYSSSSVVGGSPYRS) shows a compositional bias: low complexity. The tract at residues 1–44 (MSYSRSMYSSSSVVGGSPYRSLSSAPRFAPGSSAASVHAGPGGS) is disordered. Residues 2-82 (SYSRSMYSSS…NVSLMGGAQN (81 aa)) are head. Positions 83–118 (EKETMQDLNDRLASYLERVRSLETANKELEVQIRQH) are coil 1A. Positions 83-393 (EKETMQDLND…RLLEGDSFDL (311 aa)) constitute an IF rod domain. The interval 119-134 (TEKKGPAKDWSPYYKA) is linker 1. A coil 1B region spans residues 135 to 226 (IEDLKKQVFD…KNHQDDVNEL (92 aa)). The interval 227 to 250 (QAQIARSAVTVEVDAPKSQDLGKI) is linker 12. Positions 251–388 (MAELRAQYDG…IHTYRRLLEG (138 aa)) are coil 2. The segment at 389–432 (DSFDLQDAVPTVTTQTVKKVITTTQRIVDGKVVAESNDTEVLKA) is tail.

It belongs to the intermediate filament family. As to quaternary structure, heterotetramer of two type I and two type II keratins. Keratin-18 associates with keratin-8. Post-translationally, phosphorylated. Proteolytically cleaved by caspases during epithelial cell apoptosis.

Its function is as follows. When phosphorylated, plays a role in filament reorganization. In Xenopus laevis (African clawed frog), this protein is Keratin, type I cytoskeletal 18-B (krt18-b).